Consider the following 120-residue polypeptide: Acyl carrier protein, mitochondrial (120 aa).

The region spanning 43 to 117 (KEITDRVIGV…ETISYLRKTP (75 aa)) is the Carrier domain. The residue at position 77 (S77) is an O-(pantetheine 4'-phosphoryl)serine.

Belongs to the acyl carrier protein (ACP) family. As to quaternary structure, complex I is composed of about 45 different subunits. In terms of processing, 4'-phosphopantetheine is transferred from CoA to a specific serine of apo-ACP by acpS. This modification is essential for activity because fatty acids are bound in thioester linkage to the sulfhydryl of the prosthetic group.

The protein localises to the mitochondrion. It participates in lipid metabolism; fatty acid biosynthesis. Functionally, carrier of the growing fatty acid chain in fatty acid biosynthesis. May be involved in the synthesis of very-long-chain fatty acids. Accessory and non-catalytic subunit of the mitochondrial membrane respiratory chain NADH dehydrogenase (Complex I), which functions in the transfer of electrons from NADH to the respiratory chain. The protein is Acyl carrier protein, mitochondrial (ndufab1) of Dictyostelium discoideum (Social amoeba).